A 113-amino-acid chain; its full sequence is U11-theraphotoxin-Hhn1d (113 aa).

The signal sequence occupies residues 1–21; it reads MNTVRVTFLLVFVVAVSLGQA. The propeptide occupies 22-74; the sequence is DKDENRMEMKDKTEQGKSYLHFAENLLLQKLEDVEAKLLEKDSEKSINSRQKR. 3 disulfides stabilise this stretch: Cys-75–Cys-90, Cys-82–Cys-95, and Cys-89–Cys-110.

The protein belongs to the neurotoxin 14 (magi-1) family. 01 (HNTX-16) subfamily. In terms of tissue distribution, expressed by the venom gland.

It is found in the secreted. Probable ion channel inhibitor. The sequence is that of U11-theraphotoxin-Hhn1d from Cyriopagopus hainanus (Chinese bird spider).